Here is a 569-residue protein sequence, read N- to C-terminus: Urease subunit beta (569 aa).

The 439-residue stretch at 131 to 569 (GGIDTHIHFI…VSLAQLFSIF (439 aa)) folds into the Urease domain. Residues His136, His138, and Lys219 each contribute to the Ni(2+) site. Lys219 is subject to N6-carboxylysine. His221 contributes to the substrate binding site. Ni(2+)-binding residues include His248 and His274. His322 serves as the catalytic Proton donor. Asp362 lines the Ni(2+) pocket.

Belongs to the metallo-dependent hydrolases superfamily. Urease alpha subunit family. Heterohexamer of 3 UreA (alpha) and 3 UreB (beta) subunits. Four heterohexamers assemble to form a 16 nm dodecameric complex. It depends on Ni cation as a cofactor. Post-translationally, carboxylation allows a single lysine to coordinate two nickel ions.

Its subcellular location is the cytoplasm. It catalyses the reaction urea + 2 H2O + H(+) = hydrogencarbonate + 2 NH4(+). It participates in nitrogen metabolism; urea degradation; CO(2) and NH(3) from urea (urease route): step 1/1. Its function is as follows. Ammonia produced by ureolysis increases the gastric pH thereby providing an environment permissive for colonization of the stomach. The polypeptide is Urease subunit beta (Helicobacter pylori (strain J99 / ATCC 700824) (Campylobacter pylori J99)).